A 79-amino-acid chain; its full sequence is MLILTRRPGEALYLDDNIKITVLSVQGRQVKLGLEIPAETTVYREEVYLKIKEQNRLALENTEQDLLAATELWQKKEKK.

The protein belongs to the CsrA/RsmA family. Homodimer; the beta-strands of each monomer intercalate to form a hydrophobic core, while the alpha-helices form wings that extend away from the core.

The protein resides in the cytoplasm. Functionally, a translational regulator that binds mRNA to regulate translation initiation and/or mRNA stability. Usually binds in the 5'-UTR at or near the Shine-Dalgarno sequence preventing ribosome-binding, thus repressing translation. Its main target seems to be the major flagellin gene, while its function is anatagonized by FliW. This Maridesulfovibrio salexigens (strain ATCC 14822 / DSM 2638 / NCIMB 8403 / VKM B-1763) (Desulfovibrio salexigens) protein is Translational regulator CsrA.